The sequence spans 1009 residues: Probable beta-galactosidase B (1009 aa).

An N-terminal signal peptide occupies residues 1-21; the sequence is MAQLFTKIIVYFLLFASPLLA. Asparagine 28 carries N-linked (GlcNAc...) asparagine glycosylation. Position 85 (tyrosine 85) interacts with substrate. Residue asparagine 95 is glycosylated (N-linked (GlcNAc...) asparagine). Asparagine 130, alanine 131, glutamate 132, and asparagine 190 together coordinate substrate. Glutamate 191 functions as the Proton donor in the catalytic mechanism. Residue asparagine 247 is glycosylated (N-linked (GlcNAc...) asparagine). Tyrosine 260 contributes to the substrate binding site. Cysteine 266 and cysteine 319 are joined by a disulfide. Glutamate 303 serves as the catalytic Nucleophile. A substrate-binding site is contributed by tyrosine 368. Residues asparagine 375, asparagine 406, asparagine 427, asparagine 451, asparagine 682, asparagine 740, asparagine 771, asparagine 784, asparagine 826, and asparagine 883 are each glycosylated (N-linked (GlcNAc...) asparagine).

The protein belongs to the glycosyl hydrolase 35 family.

The protein localises to the secreted. The catalysed reaction is Hydrolysis of terminal non-reducing beta-D-galactose residues in beta-D-galactosides.. Functionally, cleaves beta-linked terminal galactosyl residues from gangliosides, glycoproteins, and glycosaminoglycans. The polypeptide is Probable beta-galactosidase B (lacB) (Talaromyces marneffei (strain ATCC 18224 / CBS 334.59 / QM 7333) (Penicillium marneffei)).